Consider the following 336-residue polypeptide: Abasic site processing protein HMCES (336 aa).

C2 functions as the Nucleophile in the catalytic mechanism. C2 bears the Thiazolidine linkage to a ring-opened DNA abasic site mark. Residues Q29–Y38 show a composition bias toward basic and acidic residues. A disordered region spans residues Q29–V52. E127 is a catalytic residue. The disordered stretch occupies residues L283–A336.

The protein belongs to the SOS response-associated peptidase family.

It is found in the chromosome. Its activity is regulated as follows. Formation and reversal of DNA-protein cross-link depends on DNA context. Catalyzes formation of the thiazolidine linkage in presence of abasic sites in single-stranded DNA. Mediates the reversal of the thiazolidine cross-link in presence of double stranded DNA. Its function is as follows. Sensor of abasic sites in single-stranded DNA (ssDNA) required to preserve genome integrity by promoting error-free repair of abasic sites. Acts as an enzyme that recognizes and binds abasic sites in ssDNA at replication forks and chemically modifies the lesion by forming a covalent cross-link with DNA: forms a stable thiazolidine linkage between a ring-opened abasic site and the alpha-amino and sulfhydryl substituents of its N-terminal catalytic cysteine residue. The HMCES DNA-protein cross-link is then either reversed or degraded. HMCES is able to catalyze the reversal of its thiazolidine cross-link and cycle between a cross-link and a non-cross-linked state depending on DNA context: mediates self-reversal of the thiazolidine cross-link in double stranded DNA, allowing APEX1 to initiate downstream repair of abasic sites. The HMCES DNA-protein cross-link can also be degraded by the SPRTN metalloprotease following unfolding by the BRIP1/FANCJ helicase. Promotes error-free repair of abasic sites by protecting abasic sites from translesion synthesis (TLS) polymerases and endonucleases that are error-prone and would generate mutations and double-strand breaks. Acts as a protease: mediates autocatalytic processing of its N-terminal methionine in order to expose the catalytic cysteine. The HMCES DNA-protein cross-link is then either reversed or degraded. According to a model, the HMCES DNA-protein cross-link. This chain is Abasic site processing protein HMCES, found in Gallus gallus (Chicken).